A 284-amino-acid polypeptide reads, in one-letter code: 4-hydroxybenzoate octaprenyltransferase (284 aa).

The next 7 helical transmembrane spans lie at 33 to 53 (VIAA…LGVF), 93 to 113 (IGLF…MNPL), 136 to 156 (YLPQ…AWAA), 159 to 179 (GELP…TIAY), 209 to 229 (LVIG…GQHY), 231 to 248 (LGQS…LFVY), and 264 to 284 (AFLN…IAFW).

This sequence belongs to the UbiA prenyltransferase family. It depends on Mg(2+) as a cofactor.

It localises to the cell inner membrane. It carries out the reaction all-trans-octaprenyl diphosphate + 4-hydroxybenzoate = 4-hydroxy-3-(all-trans-octaprenyl)benzoate + diphosphate. It participates in cofactor biosynthesis; ubiquinone biosynthesis. Functionally, catalyzes the prenylation of para-hydroxybenzoate (PHB) with an all-trans polyprenyl group. Mediates the second step in the final reaction sequence of ubiquinone-8 (UQ-8) biosynthesis, which is the condensation of the polyisoprenoid side chain with PHB, generating the first membrane-bound Q intermediate 3-octaprenyl-4-hydroxybenzoate. The protein is 4-hydroxybenzoate octaprenyltransferase of Vibrio campbellii (strain ATCC BAA-1116).